The primary structure comprises 339 residues: Type IV secretion system protein PtlH homolog (339 aa).

It belongs to the GSP E family.

The chain is Type IV secretion system protein PtlH homolog (ptlH) from Bordetella parapertussis (strain 12822 / ATCC BAA-587 / NCTC 13253).